The following is a 413-amino-acid chain: UPF0754 membrane protein PCC7424_0748 (413 aa).

Transmembrane regions (helical) follow at residues 3–23 (IALELSTIWTIALPPITGAII) and 391–411 (IVNLGGILGFFVGTIQTVILL).

Belongs to the UPF0754 family.

It localises to the cell inner membrane. The polypeptide is UPF0754 membrane protein PCC7424_0748 (Gloeothece citriformis (strain PCC 7424) (Cyanothece sp. (strain PCC 7424))).